Reading from the N-terminus, the 104-residue chain is ATP synthase subunit c (104 aa).

2 helical membrane passes run 37 to 57 and 83 to 103; these read LLGA…QGAV and AGIA…LIFV.

This sequence belongs to the ATPase C chain family. As to quaternary structure, F-type ATPases have 2 components, F(1) - the catalytic core - and F(0) - the membrane proton channel. F(1) has five subunits: alpha(3), beta(3), gamma(1), delta(1), epsilon(1). F(0) has three main subunits: a(1), b(2) and c(10-14). The alpha and beta chains form an alternating ring which encloses part of the gamma chain. F(1) is attached to F(0) by a central stalk formed by the gamma and epsilon chains, while a peripheral stalk is formed by the delta and b chains.

The protein localises to the cell membrane. Its function is as follows. F(1)F(0) ATP synthase produces ATP from ADP in the presence of a proton or sodium gradient. F-type ATPases consist of two structural domains, F(1) containing the extramembraneous catalytic core and F(0) containing the membrane proton channel, linked together by a central stalk and a peripheral stalk. During catalysis, ATP synthesis in the catalytic domain of F(1) is coupled via a rotary mechanism of the central stalk subunits to proton translocation. In terms of biological role, key component of the F(0) channel; it plays a direct role in translocation across the membrane. A homomeric c-ring of between 10-14 subunits forms the central stalk rotor element with the F(1) delta and epsilon subunits. This chain is ATP synthase subunit c, found in Mesoplasma florum (strain ATCC 33453 / NBRC 100688 / NCTC 11704 / L1) (Acholeplasma florum).